Consider the following 264-residue polypeptide: Phosphonoacetaldehyde hydrolase (264 aa).

Asp9 functions as the Nucleophile in the catalytic mechanism. The Mg(2+) site is built by Asp9 and Ala11. Catalysis depends on Lys50, which acts as the Schiff-base intermediate with substrate. Asp183 contributes to the Mg(2+) binding site.

This sequence belongs to the HAD-like hydrolase superfamily. PhnX family. In terms of assembly, homodimer. Mg(2+) is required as a cofactor.

The catalysed reaction is phosphonoacetaldehyde + H2O = acetaldehyde + phosphate + H(+). Functionally, involved in phosphonate degradation. In Bacillus cereus (strain ATCC 14579 / DSM 31 / CCUG 7414 / JCM 2152 / NBRC 15305 / NCIMB 9373 / NCTC 2599 / NRRL B-3711), this protein is Phosphonoacetaldehyde hydrolase.